The chain runs to 348 residues: Succinylglutamate desuccinylase (348 aa).

H64, E67, and H164 together coordinate Zn(2+). The active site involves E228.

This sequence belongs to the AspA/AstE family. Succinylglutamate desuccinylase subfamily. It depends on Zn(2+) as a cofactor.

The catalysed reaction is N-succinyl-L-glutamate + H2O = L-glutamate + succinate. It participates in amino-acid degradation; L-arginine degradation via AST pathway; L-glutamate and succinate from L-arginine: step 5/5. Its function is as follows. Transforms N(2)-succinylglutamate into succinate and glutamate. The chain is Succinylglutamate desuccinylase from Shewanella amazonensis (strain ATCC BAA-1098 / SB2B).